A 90-amino-acid chain; its full sequence is Small ribosomal subunit protein bS16 (90 aa).

This sequence belongs to the bacterial ribosomal protein bS16 family.

This is Small ribosomal subunit protein bS16 from Lysinibacillus sphaericus (strain C3-41).